Reading from the N-terminus, the 391-residue chain is Processive diacylglycerol beta-glucosyltransferase (391 aa).

The protein belongs to the glycosyltransferase 28 family. UgtP subfamily.

Its subcellular location is the cell membrane. The enzyme catalyses a 1,2-diacyl-3-O-(beta-D-glucopyranosyl)-sn-glycerol + UDP-alpha-D-glucose = a 1,2-diacyl-3-O-(beta-D-Glc-(1-&gt;6)-beta-D-Glc)-sn-glycerol + UDP + H(+). The catalysed reaction is a 1,2-diacyl-sn-glycerol + UDP-alpha-D-glucose = a 1,2-diacyl-3-O-(beta-D-glucopyranosyl)-sn-glycerol + UDP + H(+). It functions in the pathway glycolipid metabolism; diglucosyl-diacylglycerol biosynthesis. In terms of biological role, processive glucosyltransferase involved in the biosynthesis of both the bilayer- and non-bilayer-forming membrane glucolipids. Is able to successively transfer two glucosyl residues to diacylglycerol (DAG), thereby catalyzing the formation of beta-monoglucosyl-DAG (3-O-(beta-D-glucopyranosyl)-1,2-diacyl-sn-glycerol) and beta-diglucosyl-DAG (3-O-(beta-D-glucopyranosyl-beta-(1-&gt;6)-D-glucopyranosyl)-1,2-diacyl-sn-glycerol). Beta-diglucosyl-DAG is the predominant glycolipid found in Bacillales and is also used as a membrane anchor for lipoteichoic acid (LTA). The sequence is that of Processive diacylglycerol beta-glucosyltransferase from Staphylococcus aureus (strain MRSA252).